A 211-amino-acid chain; its full sequence is Large ribosomal subunit protein uL4 (211 aa).

A disordered region spans residues 40-85 (QQAHSRQGTASTLTRSEVRGGGRKPYKQKGTGRARQGSVRTPLRPG). A compositionally biased stretch (polar residues) spans 41–54 (QAHSRQGTASTLTR). Residues 60 to 71 (GGRKPYKQKGTG) are compositionally biased toward basic residues.

Belongs to the universal ribosomal protein uL4 family. Part of the 50S ribosomal subunit.

In terms of biological role, one of the primary rRNA binding proteins, this protein initially binds near the 5'-end of the 23S rRNA. It is important during the early stages of 50S assembly. It makes multiple contacts with different domains of the 23S rRNA in the assembled 50S subunit and ribosome. Functionally, forms part of the polypeptide exit tunnel. The sequence is that of Large ribosomal subunit protein uL4 from Synechococcus sp. (strain CC9311).